The sequence spans 398 residues: Succinyl-diaminopimelate desuccinylase (398 aa).

Position 68 (His-68) interacts with Zn(2+). Asp-70 is an active-site residue. Residue Asp-101 participates in Zn(2+) binding. The active-site Proton acceptor is Glu-135. Residues Glu-136, Glu-164, and His-349 each coordinate Zn(2+).

The protein belongs to the peptidase M20A family. DapE subfamily. As to quaternary structure, homodimer. Requires Zn(2+) as cofactor. Co(2+) is required as a cofactor.

The enzyme catalyses N-succinyl-(2S,6S)-2,6-diaminopimelate + H2O = (2S,6S)-2,6-diaminopimelate + succinate. Its pathway is amino-acid biosynthesis; L-lysine biosynthesis via DAP pathway; LL-2,6-diaminopimelate from (S)-tetrahydrodipicolinate (succinylase route): step 3/3. Functionally, catalyzes the hydrolysis of N-succinyl-L,L-diaminopimelic acid (SDAP), forming succinate and LL-2,6-diaminopimelate (DAP), an intermediate involved in the bacterial biosynthesis of lysine and meso-diaminopimelic acid, an essential component of bacterial cell walls. In Wolbachia pipientis subsp. Culex pipiens (strain wPip), this protein is Succinyl-diaminopimelate desuccinylase.